Reading from the N-terminus, the 963-residue chain is Protein translocase subunit SecA (963 aa).

ATP contacts are provided by residues Gln-87, 105–109, and Asp-512; that span reads GEGKT. 2 disordered regions span residues 868–909 and 924–963; these read GPVM…EDFT and QFVG…CHGS. A compositionally biased stretch (acidic residues) spans 874–886; it reads PDEEEDGDEDSVE. Positions 949, 951, 960, and 961 each coordinate Zn(2+).

This sequence belongs to the SecA family. As to quaternary structure, monomer and homodimer. Part of the essential Sec protein translocation apparatus which comprises SecA, SecYEG and auxiliary proteins SecDF. Other proteins may also be involved. The cofactor is Zn(2+).

Its subcellular location is the cell inner membrane. It localises to the cytoplasm. It catalyses the reaction ATP + H2O + cellular proteinSide 1 = ADP + phosphate + cellular proteinSide 2.. Functionally, part of the Sec protein translocase complex. Interacts with the SecYEG preprotein conducting channel. Has a central role in coupling the hydrolysis of ATP to the transfer of proteins into and across the cell membrane, serving as an ATP-driven molecular motor driving the stepwise translocation of polypeptide chains across the membrane. This is Protein translocase subunit SecA from Solibacter usitatus (strain Ellin6076).